We begin with the raw amino-acid sequence, 207 residues long: Guanylate kinase (207 aa).

Residues Gly4 to Arg184 enclose the Guanylate kinase-like domain. Ala11 to Ser18 is an ATP binding site.

Belongs to the guanylate kinase family.

It is found in the cytoplasm. The enzyme catalyses GMP + ATP = GDP + ADP. Functionally, essential for recycling GMP and indirectly, cGMP. In Escherichia coli O157:H7, this protein is Guanylate kinase.